Here is a 104-residue protein sequence, read N- to C-terminus: Large ribosomal subunit protein bL21 (104 aa).

The protein belongs to the bacterial ribosomal protein bL21 family. In terms of assembly, part of the 50S ribosomal subunit. Contacts protein L20.

Functionally, this protein binds to 23S rRNA in the presence of protein L20. The sequence is that of Large ribosomal subunit protein bL21 from Streptococcus pneumoniae serotype 2 (strain D39 / NCTC 7466).